Reading from the N-terminus, the 227-residue chain is Cytochrome c oxidase subunit 2 (227 aa).

The Mitochondrial intermembrane portion of the chain corresponds to Met1–Ser14. Residues Pro15–Met45 traverse the membrane as a helical segment. Residues Leu46–Gln59 lie on the Mitochondrial matrix side of the membrane. The helical transmembrane segment at Glu60 to Met87 threads the bilayer. The Mitochondrial intermembrane portion of the chain corresponds to Asp88–Val227. 6 residues coordinate Cu cation: His161, Cys196, Glu198, Cys200, His204, and Met207. A Mg(2+)-binding site is contributed by Glu198. Tyr218 is modified (phosphotyrosine).

It belongs to the cytochrome c oxidase subunit 2 family. In terms of assembly, component of the cytochrome c oxidase (complex IV, CIV), a multisubunit enzyme composed of 14 subunits. The complex is composed of a catalytic core of 3 subunits MT-CO1, MT-CO2 and MT-CO3, encoded in the mitochondrial DNA, and 11 supernumerary subunits COX4I, COX5A, COX5B, COX6A, COX6B, COX6C, COX7A, COX7B, COX7C, COX8 and NDUFA4, which are encoded in the nuclear genome. The complex exists as a monomer or a dimer and forms supercomplexes (SCs) in the inner mitochondrial membrane with NADH-ubiquinone oxidoreductase (complex I, CI) and ubiquinol-cytochrome c oxidoreductase (cytochrome b-c1 complex, complex III, CIII), resulting in different assemblies (supercomplex SCI(1)III(2)IV(1) and megacomplex MCI(2)III(2)IV(2)). Found in a complex with TMEM177, COA6, COX18, COX20, SCO1 and SCO2. Interacts with TMEM177 in a COX20-dependent manner. Interacts with COX20. Interacts with COX16. Requires Cu cation as cofactor.

It localises to the mitochondrion inner membrane. It carries out the reaction 4 Fe(II)-[cytochrome c] + O2 + 8 H(+)(in) = 4 Fe(III)-[cytochrome c] + 2 H2O + 4 H(+)(out). In terms of biological role, component of the cytochrome c oxidase, the last enzyme in the mitochondrial electron transport chain which drives oxidative phosphorylation. The respiratory chain contains 3 multisubunit complexes succinate dehydrogenase (complex II, CII), ubiquinol-cytochrome c oxidoreductase (cytochrome b-c1 complex, complex III, CIII) and cytochrome c oxidase (complex IV, CIV), that cooperate to transfer electrons derived from NADH and succinate to molecular oxygen, creating an electrochemical gradient over the inner membrane that drives transmembrane transport and the ATP synthase. Cytochrome c oxidase is the component of the respiratory chain that catalyzes the reduction of oxygen to water. Electrons originating from reduced cytochrome c in the intermembrane space (IMS) are transferred via the dinuclear copper A center (CU(A)) of subunit 2 and heme A of subunit 1 to the active site in subunit 1, a binuclear center (BNC) formed by heme A3 and copper B (CU(B)). The BNC reduces molecular oxygen to 2 water molecules using 4 electrons from cytochrome c in the IMS and 4 protons from the mitochondrial matrix. This Nyctereutes procyonoides (Raccoon dog) protein is Cytochrome c oxidase subunit 2 (MT-CO2).